A 450-amino-acid chain; its full sequence is Keratin, type I cytoskeletal 25 (450 aa).

Residues 1-11 show a composition bias toward low complexity; it reads MSLRLSSASRR. The disordered stretch occupies residues 1 to 20; that stretch reads MSLRLSSASRRSCPRPTTGS. The head stretch occupies residues 1 to 78; it reads MSLRLSSASR…VNERGLLSGN (78 aa). The tract at residues 79–114 is coil 1A; it reads EKVTMQNLNDRLASYLDSVHALEEANADLEQKIKGW. Residues 79–394 form the IF rod domain; sequence EKVTMQNLND…LLIGGDDGAC (316 aa). The segment at 115–136 is linker 1; that stretch reads YEKFGPGSCRGLDHDYSRYFPI. A coil 1B region spans residues 137 to 228; the sequence is IDDLKNQIIA…KNHKEEMQVL (92 aa). The tract at residues 229 to 251 is linker 12; sequence QCAAGGNVNVEMNAAPGVDLTVL. Positions 252–390 are coil 2; it reads LNNMRAEYEA…ETYCLLIGGD (139 aa). Residues 391–450 form a tail region; that stretch reads DGACKSGGYKSKDYGSGNVGSQVKDPAKAIVVKKVLEEVDQRSKILTTRLHSLEEKSQSN. Phosphoserine is present on S442.

The protein belongs to the intermediate filament family. In terms of assembly, heterodimer of a type I and a type II keratin. Heterodimer with type II keratin KRT5 leading to the formation of keratin intermediate filament (KIF) network. Interacts with KRT6A to form filaments. In terms of tissue distribution, strongly expressed in skin and scalp, and weak expression observed in thymus and tongue. In the hair follicle, expressed in Henle layer, Huxley layer and in the inner root sheath cuticle of the hair follicle. Expression extends from the bulb region up to the point of differentiation into the three layers. Also present in the medulla of beard hair (at protein level).

The protein localises to the cytoplasm. Its function is as follows. Essential for the proper assembly of type I and type II keratin protein complexes and formation of keratin intermediate filaments in the inner root sheath (irs). Plays a role in the cytoskeleton organization. The chain is Keratin, type I cytoskeletal 25 from Homo sapiens (Human).